We begin with the raw amino-acid sequence, 450 residues long: UDP-N-acetylmuramoylalanine--D-glutamate ligase (450 aa).

Gly-119 to Thr-125 provides a ligand contact to ATP.

Belongs to the MurCDEF family.

It is found in the cytoplasm. The catalysed reaction is UDP-N-acetyl-alpha-D-muramoyl-L-alanine + D-glutamate + ATP = UDP-N-acetyl-alpha-D-muramoyl-L-alanyl-D-glutamate + ADP + phosphate + H(+). The protein operates within cell wall biogenesis; peptidoglycan biosynthesis. Its function is as follows. Cell wall formation. Catalyzes the addition of glutamate to the nucleotide precursor UDP-N-acetylmuramoyl-L-alanine (UMA). In Bacillus cereus (strain ATCC 10987 / NRS 248), this protein is UDP-N-acetylmuramoylalanine--D-glutamate ligase.